A 697-amino-acid chain; its full sequence is SPX domain-containing membrane protein OsI_08463 (697 aa).

The region spanning 2–145 (VNFGKRLMAD…GYKFTDYYVS (144 aa)) is the SPX domain. 11 helical membrane passes run 247–267 (FMSL…TYII), 278–298 (LGAA…AQVF), 315–335 (LVFS…AYDV), 338–356 (LTVL…ARAV), 375–395 (AGFV…AGLL), 411–431 (LPGW…WISF), 513–533 (LLIY…SSVV), 544–564 (TVAM…VIVG), 576–596 (ILVA…RFTS), 604–624 (VSSA…NLSL), and 670–690 (LLNV…VATF).

The protein belongs to the major facilitator superfamily.

It localises to the membrane. This is SPX domain-containing membrane protein OsI_08463 from Oryza sativa subsp. indica (Rice).